Reading from the N-terminus, the 305-residue chain is Autophagy-related protein 27 (305 aa).

Positions 1 to 22 are cleaved as a signal peptide; the sequence is MARYKGLSILSLFAVFSSLASA. Residues 23-242 lie on the Lumenal side of the membrane; that stretch reads ELDCSNIKVD…EDGGSAPSGH (220 aa). Residues 24 to 231 enclose the MRH domain; it reads LDCSNIKVDG…EWKTKYACEN (208 aa). 2 disulfides stabilise this stretch: Cys26–Cys66 and Cys74–Cys81. N-linked (GlcNAc...) asparagine glycosylation occurs at Asn58. Asn85 carries an N-linked (GlcNAc...) asparagine glycan. A disulfide bridge connects residues Cys156 and Cys229. The tract at residues 163-202 is disordered; it reads LEGLESPKPDGDKKKDGEKKDDDKKDNKDKEGKSKRDGEE. Residues 243 to 263 form a helical membrane-spanning segment; sequence WGFFTWVIVLYVVLVSLPLLS. At 264 to 305 the chain is on the cytoplasmic side; the sequence is ERVTNVRCHSQPVPVHFGLSDIRLVAQLQPVWSSRVGLASSQ.

This sequence belongs to the ATG27 family.

It is found in the cytoplasmic vesicle membrane. Its subcellular location is the golgi apparatus membrane. It localises to the mitochondrion membrane. The protein resides in the preautophagosomal structure membrane. In terms of biological role, effector of phosphatidylinositol 3-phosphate kinase signaling. Regulates the cytoplasm to vacuole transport (Cvt) vesicle formation. Plays a role in ATG protein retrieval from the pre-autophagosomal structure (PAS). The polypeptide is Autophagy-related protein 27 (Arthroderma benhamiae (strain ATCC MYA-4681 / CBS 112371) (Trichophyton mentagrophytes)).